Consider the following 185-residue polypeptide: Ribosome-recycling factor (185 aa).

The protein belongs to the RRF family.

The protein resides in the cytoplasm. Its function is as follows. Responsible for the release of ribosomes from messenger RNA at the termination of protein biosynthesis. May increase the efficiency of translation by recycling ribosomes from one round of translation to another. The polypeptide is Ribosome-recycling factor (Wolbachia sp. subsp. Brugia malayi (strain TRS)).